The sequence spans 87 residues: Small ribosomal subunit protein uS17 (87 aa).

This sequence belongs to the universal ribosomal protein uS17 family. As to quaternary structure, part of the 30S ribosomal subunit.

Functionally, one of the primary rRNA binding proteins, it binds specifically to the 5'-end of 16S ribosomal RNA. The protein is Small ribosomal subunit protein uS17 of Geobacillus sp. (strain WCH70).